Reading from the N-terminus, the 329-residue chain is Sex comb on midleg-like protein 1 (329 aa).

Phosphoserine is present on residues Ser-138 and Ser-238. The segment at 138–157 is disordered; that stretch reads SPTLPVSRRENNSPSNLPRP. Residues 258–325 enclose the SAM domain; the sequence is WSVEAVVLFL…YYIDRLKQGK (68 aa).

It belongs to the SCM family.

Its subcellular location is the nucleus. Putative Polycomb group (PcG) protein. PcG proteins act by forming multiprotein complexes, which are required to maintain the transcriptionally repressive state of homeotic genes throughout development. May be involved in spermatogenesis during sexual maturation. This chain is Sex comb on midleg-like protein 1 (SCML1), found in Gorilla gorilla gorilla (Western lowland gorilla).